The primary structure comprises 146 residues: Hemoglobin subunit beta (146 aa).

Val-1 carries the post-translational modification N-acetylvaline. The region spanning 2-146 is the Globin domain; that stretch reads HLTADEKAAV…VATALAHKYH (145 aa). Residue Thr-12 is modified to Phosphothreonine. Phosphoserine is present on Ser-44. Lys-59 is subject to N6-acetyllysine. Position 63 (His-63) interacts with heme b. An N6-acetyllysine modification is found at Lys-82. Residue His-92 coordinates heme b. At Cys-93 the chain carries S-nitrosocysteine. Lys-144 is modified (N6-acetyllysine).

Belongs to the globin family. Heterotetramer of two alpha chains and two beta chains. In terms of tissue distribution, red blood cells.

Involved in oxygen transport from the lung to the various peripheral tissues. The polypeptide is Hemoglobin subunit beta (HBB) (Cephalopachus bancanus (Western tarsier)).